A 324-amino-acid chain; its full sequence is MGCERKALILMVVIWIMSFWTLSLADISSTEIAVYWGQREDGLLRDTCKTNNYKIVFISFLDKFGCEIRKPELELEGVCGPSVGNPCSFLESQIKECQRMGVKVFLALGGPKGTYSACSADYAKDLAEYLHTYFLSERREGPLGKVALDGIHFDIQKPVDELNWDNLLEELYQIKDVYQSTFLLSAAPGCLSPDEYLDNAIQTRHFDYIFVRFYNDRSCQYSTGNIQRIRNAWLSWTKSVYPRDKNLFLELPASQATAPGGGYIPPSALIGQVLPYLPDLQTRYAGIALWNRQADKETGYSTNIIRYLNATAMPFTSNLLKYPS.

The signal sequence occupies residues M1–A25. Residues T30–T311 form the GH18 domain. Residue N309 is glycosylated (N-linked (GlcNAc...) asparagine).

The protein belongs to the glycosyl hydrolase 18 family.

Functionally, may act as a carbohydrate-binding protein. This is Concanavalin B from Canavalia ensiformis (Jack bean).